The following is a 382-amino-acid chain: Gap junction alpha-1 protein (382 aa).

Over 2 to 23 (GDWSALGKLLDKVQAYSTAGGK) the chain is Cytoplasmic. Ser-5 carries the post-translational modification Phosphoserine. The chain crosses the membrane as a helical span at residues 24–44 (VWLSVLFIFRILLLGTAVESA). Topologically, residues 45–76 (WGDEQSAFRCNTQQPGCENVCYDKSFPISHVR) are extracellular. 2 disulfides stabilise this stretch: Cys-54–Cys-192 and Cys-187–Cys-198. Residues 77–97 (FWVLQIIFVSVPTLLYLAHVF) traverse the membrane as a helical segment. Residues 98 to 155 (YVMRKEEKLNKKEEELKVAQTDGVNVEMHLKQIEIKKFKYGIEEHGKVKMRGGLLRTY) lie on the Cytoplasmic side of the membrane. A Glycyl lysine isopeptide (Lys-Gly) (interchain with G-Cter in SUMO) cross-link involves residue Lys-144. The chain crosses the membrane as a helical span at residues 156–176 (IISILFKSVFEVAFLLIQWYI). Over 177 to 207 (YGFSLSAVYTCKRDPCPHQVDCFLSRPTEKT) the chain is Extracellular. Residues 208-228 (IFIIFMLVVSLVSLALNIIEL) traverse the membrane as a helical segment. The Cytoplasmic segment spans residues 229-382 (FYVFFKGVKD…SRPRPDDLEI (154 aa)). Lys-237 participates in a covalent cross-link: Glycyl lysine isopeptide (Lys-Gly) (interchain with G-Cter in SUMO). Residues 244–382 (SDPYHATTGP…SRPRPDDLEI (139 aa)) form an interaction with NOV region. Residue Tyr-247 is modified to Phosphotyrosine. Ser-255, Ser-257, and Ser-262 each carry phosphoserine. Residues 264–382 (KYAYFNGCSS…SRPRPDDLEI (119 aa)) form an interaction with UBQLN4 region. Cys-271 carries the S-nitrosocysteine modification. Thr-275 carries the phosphothreonine modification. Phosphoserine is present on residues Ser-306, Ser-314, and Ser-325. The span at 317–332 (QNRMGQAGSTISNSHA) shows a compositional bias: polar residues. The interval 317–382 (QNRMGQAGST…SRPRPDDLEI (66 aa)) is disordered. Thr-326 bears the Phosphothreonine mark. 3 positions are modified to phosphoserine: Ser-328, Ser-330, and Ser-365. Residues 362-374 (RPSSRASSRASSR) are compositionally biased toward low complexity. Ser-368 carries the post-translational modification Phosphoserine; by PKC/PRKCG and PKC/PRKCD. A phosphoserine mark is found at Ser-369 and Ser-373.

The protein belongs to the connexin family. Alpha-type (group II) subfamily. In terms of assembly, a connexon is composed of a hexamer of connexins. Interacts with SGSM3. Interacts with RIC1/CIP150. Interacts with CNST and CSNK1D. Interacts (via C-terminus) with TJP1. Interacts (via C-terminus) with SRC (via SH3 domain). Interacts (not ubiquitinated) with UBQLN4 (via UBA domain). Interacts with NOV. Interacts with TMEM65. Interacts with ANK3/ANKG and PKP2. Contains at least one intramolecular disulfide bond. Post-translationally, phosphorylation at Ser-325, Ser-328 and Ser-330 by CK1 modulates gap junction assembly. Phosphorylated at Ser-368 by PRKCG; phosphorylation induces disassembly of gap junction plaques and inhibition of gap junction activity. Phosphorylation at Ser-368 by PRKCD triggers its internalization into small vesicles leading to proteasome-mediated degradation. In terms of processing, sumoylated with SUMO1, SUMO2 and SUMO3, which may regulate the level of functional Cx43 gap junctions at the plasma membrane. May be desumoylated by SENP1 or SENP2. S-nitrosylation at Cys-271 is enriched at the muscle endothelial gap junction in arteries, it augments channel permeability and may regulate of smooth muscle cell to endothelial cell communication. Post-translationally, acetylated in the developing cortex; leading to delocalization from the cell membrane. As to expression, detected in ventricle and atrium (at protein level).

It localises to the cell membrane. Its subcellular location is the cell junction. The protein resides in the gap junction. It is found in the endoplasmic reticulum. Functionally, gap junction protein that acts as a regulator of bladder capacity. A gap junction consists of a cluster of closely packed pairs of transmembrane channels, the connexons, through which materials of low MW diffuse from one cell to a neighboring cell. Negative regulator of bladder functional capacity: acts by enhancing intercellular electrical and chemical transmission, thus sensitizing bladder muscles to cholinergic neural stimuli and causing them to contract. May play a role in cell growth inhibition through the regulation of NOV expression and localization. Plays an essential role in gap junction communication in the ventricles. The chain is Gap junction alpha-1 protein (Gja1) from Rattus norvegicus (Rat).